The sequence spans 73 residues: MKADIHPDYHMIKVVMTDGTEYETRSTWGKEGDTLNLDIDPNSHPAWTGGQQTLVDRGGRLSKFKKRYEGLGI.

This sequence belongs to the bacterial ribosomal protein bL31 family. Type A subfamily. In terms of assembly, part of the 50S ribosomal subunit.

Binds the 23S rRNA. This is Large ribosomal subunit protein bL31 from Chelativorans sp. (strain BNC1).